We begin with the raw amino-acid sequence, 435 residues long: Tryptophan--tRNA ligase (435 aa).

ATP-binding positions include 10 to 12 and 18 to 19; these read TTS and GN. The short motif at 11-19 is the 'HIGH' region element; it reads TSGTPHLGN. Asp-143 is a binding site for L-tryptophan. ATP-binding positions include 155-157, Leu-195, and 202-206; these read GRD and KMSKS. A 'KMSKS' region motif is present at residues 202-206; that stretch reads KMSKS.

The protein belongs to the class-I aminoacyl-tRNA synthetase family. As to quaternary structure, homodimer.

The protein resides in the cytoplasm. The catalysed reaction is tRNA(Trp) + L-tryptophan + ATP = L-tryptophyl-tRNA(Trp) + AMP + diphosphate + H(+). In terms of biological role, catalyzes the attachment of tryptophan to tRNA(Trp). This chain is Tryptophan--tRNA ligase, found in Xylella fastidiosa (strain Temecula1 / ATCC 700964).